Consider the following 508-residue polypeptide: Maturase K (508 aa).

It belongs to the intron maturase 2 family. MatK subfamily.

Its subcellular location is the plastid. The protein resides in the chloroplast. Usually encoded in the trnK tRNA gene intron. Probably assists in splicing its own and other chloroplast group II introns. The polypeptide is Maturase K (Chaetosphaeridium globosum (Charophycean green alga)).